The chain runs to 585 residues: Glutamate decarboxylase 2 (585 aa).

Residues 1–25 (MASPGSGFWSFGSEDGSGDPENPST) form a disordered region. Phosphoserine occurs at positions 3, 6, 10, and 13. Residues Cys30 and Cys45 are each lipidated (S-palmitoyl cysteine). A substrate-binding site is contributed by 181 to 183 (QLS). At Lys396 the chain carries N6-(pyridoxal phosphate)lysine. Arg558 contacts substrate.

Belongs to the group II decarboxylase family. As to quaternary structure, homodimer. It depends on pyridoxal 5'-phosphate as a cofactor. In terms of processing, phosphorylated; which does not affect kinetic parameters or subcellular location. Post-translationally, palmitoylated; which is required for presynaptic clustering.

It localises to the cytoplasm. The protein resides in the cytosol. Its subcellular location is the cytoplasmic vesicle. It is found in the presynaptic cell membrane. The protein localises to the golgi apparatus membrane. It carries out the reaction L-glutamate + H(+) = 4-aminobutanoate + CO2. In terms of biological role, catalyzes the production of GABA. This Canis lupus familiaris (Dog) protein is Glutamate decarboxylase 2 (GAD2).